The following is a 61-amino-acid chain: Small ribosomal subunit protein uS14 (61 aa).

Residues C24, C27, C40, and C43 each coordinate Zn(2+).

It belongs to the universal ribosomal protein uS14 family. Zinc-binding uS14 subfamily. Part of the 30S ribosomal subunit. Contacts proteins S3 and S10. Zn(2+) is required as a cofactor.

Functionally, binds 16S rRNA, required for the assembly of 30S particles and may also be responsible for determining the conformation of the 16S rRNA at the A site. The polypeptide is Small ribosomal subunit protein uS14 (Staphylococcus carnosus (strain TM300)).